Reading from the N-terminus, the 102-residue chain is Small ribosomal subunit protein uS10 (102 aa).

This sequence belongs to the universal ribosomal protein uS10 family. As to quaternary structure, part of the 30S ribosomal subunit.

Its function is as follows. Involved in the binding of tRNA to the ribosomes. The chain is Small ribosomal subunit protein uS10 from Nitrosopumilus maritimus (strain SCM1).